The chain runs to 444 residues: Inward rectifier potassium channel 4 (444 aa).

At 1 to 55 (MHGHNRNGQAHVPRRKRRNRFVKKNGQCNVYFANLSNKSQRYMADIFTTCVDTRW) the chain is on the cytoplasmic side. The chain crosses the membrane as a helical span at residues 56-80 (RYMLMLFSAAFLVSWLFFGLLFWCI). Topologically, residues 81–119 (AFFHGDLEASPSVPAAGAPGGNGGAAPAAPKPCIMHVNG) are extracellular. The helical; Pore-forming intramembrane region spans 120–131 (FLGAFLFSVETQ). Positions 132-138 (TTIGYGF) form an intramembrane region, pore-forming. The Selectivity filter signature appears at 133 to 138 (TIGYGF). Topologically, residues 139 to 147 (RCVTEECPL) are extracellular. A helical membrane pass occupies residues 148–169 (AVIAVVVQSIVGCVIDSFMIGT). The Cytoplasmic segment spans residues 170–444 (IMAKMARPKK…NISYRRESAI (275 aa)). The PDZ-binding signature appears at 442 to 444 (SAI).

This sequence belongs to the inward rectifier-type potassium channel (TC 1.A.2.1) family. KCNJ4 subfamily. In terms of assembly, homomultimeric and heteromultimeric association with KCNJ2 and KCNJ12. Interacts with DLG2 and DLG4. Associates, via its PDZ-recognition domain, with a complex containing LIN7A, LIN7B, LIN7C, DLG1, CASK and APBA1. Interacts with TAX1BP3. TAX1BP3 competes with LIN7 family members for KCNJ4 binding.

Its subcellular location is the cell membrane. It localises to the postsynaptic cell membrane. The protein localises to the cytoplasmic vesicle membrane. It carries out the reaction K(+)(in) = K(+)(out). In terms of biological role, inward rectifier potassium channels are characterized by a greater tendency to allow potassium to flow into the cell rather than out of it. Their voltage dependence is regulated by the concentration of extracellular potassium; as external potassium is raised, the voltage range of the channel opening shifts to more positive voltages. The inward rectification is mainly due to the blockage of outward current by internal magnesium. Can be blocked by extracellular barium and cesium. This is Inward rectifier potassium channel 4 (KCNJ4) from Mesocricetus auratus (Golden hamster).